Consider the following 284-residue polypeptide: MRAARLMGALLALAGLLQLALSLRIAAFNIRTFGETKMSNATLSNYIVRILSRYDIALIQEVRDSHLTAVGKLLNELNQDDPNNYHHVVSEPLGRSTYKERYLFVFRPDQVSVLDSYLYDDGCEPCGNDTFNREPSVVKFSSPSTQVKEFAIVPLHAAPSDAAAEIDSLYDVYLNVRQKWDLEDIMLMGDFNAGCSYVTTSHWSSIRLRESPPFQWLIPDTADTTVSSTHCAYDRIVVAGPLLQRAVVPDSAAPFDFQAAFGLSEQTALAISDHYPVEVTLKRA.

Positions 1-22 (MRAARLMGALLALAGLLQLALS) are cleaved as a signal peptide. Residue N40 is glycosylated (N-linked (GlcNAc...) asparagine). E100 is a catalytic residue. C123 and C126 are oxidised to a cystine. N-linked (GlcNAc...) asparagine glycosylation is present at N128. Residue H156 is part of the active site. A disulfide bond links C195 and C231.

This sequence belongs to the DNase I family. Requires Ca(2+) as cofactor. Mg(2+) serves as cofactor.

Its subcellular location is the secreted. The protein resides in the zymogen granule. It localises to the nucleus envelope. It catalyses the reaction Endonucleolytic cleavage to 5'-phosphodinucleotide and 5'-phosphooligonucleotide end-products.. Serum endocuclease secreted into body fluids by a wide variety of exocrine and endocrine organs. Expressed by non-hematopoietic tissues and preferentially cleaves protein-free DNA. Among other functions, seems to be involved in cell death by apoptosis. Binds specifically to G-actin and blocks actin polymerization. Together with DNASE1L3, plays a key role in degrading neutrophil extracellular traps (NETs). NETs are mainly composed of DNA fibers and are released by neutrophils to bind pathogens during inflammation. Degradation of intravascular NETs by DNASE1 and DNASE1L3 is required to prevent formation of clots that obstruct blood vessels and cause organ damage following inflammation. The polypeptide is Deoxyribonuclease-1 (DNASE1) (Sus scrofa (Pig)).